The following is a 724-amino-acid chain: 4-alpha-glucanotransferase (724 aa).

It belongs to the disproportionating enzyme family.

It is found in the cytoplasm. It catalyses the reaction Transfers a segment of a (1-&gt;4)-alpha-D-glucan to a new position in an acceptor, which may be glucose or a (1-&gt;4)-alpha-D-glucan.. In Mycobacterium bovis (strain ATCC BAA-935 / AF2122/97), this protein is 4-alpha-glucanotransferase (malQ).